Reading from the N-terminus, the 139-residue chain is Transcription antitermination protein NusB (139 aa).

Belongs to the NusB family.

Functionally, involved in transcription antitermination. Required for transcription of ribosomal RNA (rRNA) genes. Binds specifically to the boxA antiterminator sequence of the ribosomal RNA (rrn) operons. This chain is Transcription antitermination protein NusB, found in Escherichia fergusonii (strain ATCC 35469 / DSM 13698 / CCUG 18766 / IAM 14443 / JCM 21226 / LMG 7866 / NBRC 102419 / NCTC 12128 / CDC 0568-73).